The primary structure comprises 154 residues: MAEEEKPPVSESIEDNKDDKKRTIDKVDDSVEDGAEKKPEAAVKNDGETAEKPEKKHKKRRRRQYEDEVPKEKSEDEGEDEEDEDDDGDEINDELADLDDEDDDDLAEIDPANIIPSGRRTRGKVIDFTKAAEKLKEEGKIEDDEGEDGEYGEK.

2 stretches are compositionally biased toward basic and acidic residues: residues 1 to 54 (MAEE…EKPE) and 64 to 74 (QYEDEVPKEKS). 2 disordered regions span residues 1 to 118 (MAEE…IPSG) and 135 to 154 (LKEE…YGEK). Composition is skewed to acidic residues over residues 75 to 108 (EDEG…DLAE) and 140 to 154 (KIED…YGEK).

Belongs to the CHZ1 family. Forms a heterotrimer with H2A.Z-H2B, stabilizing the association of the histone dimer. Also, with a lower affinity, forms a heterotrimer with H2A-H2B.

The protein localises to the nucleus. Functionally, forms a chaperone-bound H2A.Z-H2B complex that acts as a source for SWR1 complex-dependent H2A to H2A.Z histone replacement in chromatin. The chain is Histone H2A.Z-specific chaperone CHZ1 (CHZ1) from Meyerozyma guilliermondii (strain ATCC 6260 / CBS 566 / DSM 6381 / JCM 1539 / NBRC 10279 / NRRL Y-324) (Yeast).